Here is a 335-residue protein sequence, read N- to C-terminus: SLAM family member 7 (335 aa).

An N-terminal signal peptide occupies residues 1–22; the sequence is MAGSPTCLTLIYILWQLTGSAA. Residues 23 to 124 enclose the Ig-like V-type domain; the sequence is SGPVKELVGS…PSTQEYVLHV (102 aa). At 23–226 the chain is on the extracellular side; sequence SGPVKELVGS…GAADDPDSSM (204 aa). Asparagine 98, asparagine 142, asparagine 148, asparagine 172, asparagine 176, and asparagine 204 each carry an N-linked (GlcNAc...) asparagine glycan. One can recognise an Ig-like C2-type domain in the interval 131-206; the sequence is PKVTMGLQSN…ARNPVSRNFS (76 aa). 2 cysteine pairs are disulfide-bonded: cysteine 145–cysteine 215 and cysteine 151–cysteine 195. The helical transmembrane segment at 227–247 threads the bilayer; that stretch reads VLLCLLLVPLLLSLFVLGLFL. At 248–335 the chain is on the cytoplasmic side; sequence WFLKRERQEE…PRLFAYENVI (88 aa). The tract at residues 278 to 296 is interaction with FYN when phosphorylated at Tyr-284; sequence SGENTEYDTIPHTNRTILK. The ITSM motif lies at 302-307; it reads TVYSTV.

Isoform 1 binds to SH2D1A when its cytoplasmic tail is phosphorylated in the presence of FYN (in vitro); low affinity binding, the physiological relevance of the interaction is questioned. Interacts with SH2D1B; in NK cells. Interacts (via ITSM phosphorylated on Tyr-302) with SH2D1B, PTPN6/SHP-1, PTPN11/SHP-2, INPP5D/SHIP1, CSK and FYN. As to expression, expressed in spleen, lymph node, peripheral blood leukocytes, bone marrow, small intestine, stomach, appendix, lung and trachea. Expression was detected in NK cells, activated B-cells, NK-cell line but not in promyelocytic, B-, or T-cell lines. Expressed in monocytes. Isoform 3 is expressed at much lower level than isoform 1.

It localises to the membrane. Functionally, self-ligand receptor of the signaling lymphocytic activation molecule (SLAM) family. SLAM receptors triggered by homo- or heterotypic cell-cell interactions are modulating the activation and differentiation of a wide variety of immune cells and thus are involved in the regulation and interconnection of both innate and adaptive immune response. Activities are controlled by presence or absence of small cytoplasmic adapter proteins, SH2D1A/SAP and/or SH2D1B/EAT-2. Isoform 1 mediates NK cell activation through a SH2D1A-independent extracellular signal-regulated ERK-mediated pathway. Positively regulates NK cell functions by a mechanism dependent on phosphorylated SH2D1B. Downstream signaling implicates PLCG1, PLCG2 and PI3K. In addition to heterotypic NK cells-target cells interactions also homotypic interactions between NK cells may contribute to activation. However, in the absence of SH2D1B, inhibits NK cell function. Also acts inhibitory in T-cells. May play a role in lymphocyte adhesion. In LPS-activated monocytes negatively regulates production of pro-inflammatory cytokines. In terms of biological role, isoform 3 does not mediate any NK cell activation. The chain is SLAM family member 7 (SLAMF7) from Homo sapiens (Human).